We begin with the raw amino-acid sequence, 147 residues long: Nucleoside diphosphate kinase (147 aa).

The ATP site is built by K9, F57, R85, T91, R102, and N112. The Pros-phosphohistidine intermediate role is filled by H115.

The protein belongs to the NDK family. As to quaternary structure, homotetramer. Requires Mg(2+) as cofactor.

The protein localises to the cytoplasm. The catalysed reaction is a 2'-deoxyribonucleoside 5'-diphosphate + ATP = a 2'-deoxyribonucleoside 5'-triphosphate + ADP. It carries out the reaction a ribonucleoside 5'-diphosphate + ATP = a ribonucleoside 5'-triphosphate + ADP. Major role in the synthesis of nucleoside triphosphates other than ATP. The ATP gamma phosphate is transferred to the NDP beta phosphate via a ping-pong mechanism, using a phosphorylated active-site intermediate. This is Nucleoside diphosphate kinase from Thermosipho africanus (strain TCF52B).